A 204-amino-acid polypeptide reads, in one-letter code: Dephospho-CoA kinase (204 aa).

The region spanning 3-204 (VIGLTGGIGS…DRLDLAYRAH (202 aa)) is the DPCK domain. An ATP-binding site is contributed by 11–16 (GSGKSY).

The protein belongs to the CoaE family.

It localises to the cytoplasm. The catalysed reaction is 3'-dephospho-CoA + ATP = ADP + CoA + H(+). It participates in cofactor biosynthesis; coenzyme A biosynthesis; CoA from (R)-pantothenate: step 5/5. Functionally, catalyzes the phosphorylation of the 3'-hydroxyl group of dephosphocoenzyme A to form coenzyme A. This chain is Dephospho-CoA kinase, found in Ralstonia nicotianae (strain ATCC BAA-1114 / GMI1000) (Ralstonia solanacearum).